The primary structure comprises 329 residues: Cuticle collagen 6 (329 aa).

Triple-helical region stretches follow at residues 142-171, 189-212, 216-248, 253-279, and 282-320; these read GAAG…NGRD, GAPG…PGEP, GKSG…AGRL, GPQG…DGQS, and GPPG…CGHC. The interval 146–329 is disordered; sequence PPGPEGPPGN…CPPPRTPPGY (184 aa). Over residues 156–173 the composition is skewed to basic and acidic residues; it reads DGKDGRNGNDGKNGRDAE. The segment covering 187 to 199 has biased composition (low complexity); the sequence is PTGAPGPMGAMGP. The span at 200–212 shows a compositional bias: pro residues; that stretch reads KGPPGPKGSPGEP. The span at 251 to 272 shows a compositional bias: pro residues; that stretch reads VPGPQGAPGKPGPIGPPGPKGN. Residues 273 to 282 show a composition bias toward low complexity; it reads PGPDGQSYQG. Positions 320 to 329 are enriched in pro residues; sequence CPPPRTPPGY.

It belongs to the cuticular collagen family. As to quaternary structure, collagen polypeptide chains are complexed within the cuticle by disulfide bonds and other types of covalent cross-links.

In terms of biological role, nematode cuticles are composed largely of collagen-like proteins. The cuticle functions both as an exoskeleton and as a barrier to protect the worm from its environment. This is Cuticle collagen 6 from Caenorhabditis elegans.